The sequence spans 36 residues: Photosystem I reaction center subunit VIII (36 aa).

Residues 8 to 28 (SVLVPLVGLVFPAIAMASLFL) form a helical membrane-spanning segment.

The protein belongs to the PsaI family.

It localises to the plastid. The protein resides in the chloroplast thylakoid membrane. Its function is as follows. May help in the organization of the PsaL subunit. The protein is Photosystem I reaction center subunit VIII of Helianthus annuus (Common sunflower).